Here is a 241-residue protein sequence, read N- to C-terminus: Uridylate kinase (241 aa).

Position 15–18 (15–18) interacts with ATP; the sequence is KLSG. The involved in allosteric activation by GTP stretch occupies residues 23–28; sequence GTEGFG. Residue G57 participates in UMP binding. G58 and R62 together coordinate ATP. UMP is bound by residues D77 and 138-145; that span reads TGNPFFTT. ATP contacts are provided by T165, Y171, and D174.

It belongs to the UMP kinase family. Homohexamer.

The protein localises to the cytoplasm. It carries out the reaction UMP + ATP = UDP + ADP. It participates in pyrimidine metabolism; CTP biosynthesis via de novo pathway; UDP from UMP (UMPK route): step 1/1. Allosterically activated by GTP. Inhibited by UTP. Its function is as follows. Catalyzes the reversible phosphorylation of UMP to UDP. This is Uridylate kinase from Pectobacterium atrosepticum (strain SCRI 1043 / ATCC BAA-672) (Erwinia carotovora subsp. atroseptica).